The following is a 265-amino-acid chain: Palmitoyltransferase ZDHHC21 (265 aa).

Topologically, residues 1–16 (MGLRIHFVVDPHGWCC) are cytoplasmic. The helical transmembrane segment at 17–37 (MGLIVFVWLYNIVLIPKIVLF) threads the bilayer. Over 38–44 (PHYEEGH) the chain is Extracellular. A helical membrane pass occupies residues 45-65 (IPGILIIIFYGISIFCLVALV). Residues 66–133 (RASITDPGRL…NNCVGEDNHW (68 aa)) are Cytoplasmic-facing. Residues 90 to 140 (ELCNKCNLMRPKRSHHCSRCGHCVRRMDHHCPWINNCVGEDNHWLFLQLCF) form the DHHC domain. Residue C120 is the S-palmitoyl cysteine intermediate of the active site. Residues 134 to 154 (LFLQLCFYTELLTCYALMFSF) traverse the membrane as a helical segment. The Extracellular segment spans residues 155-185 (CHYYYFLPLKKRNLDLFVFRHELAIMRLAAF). The helical transmembrane segment at 186–206 (MGITMLVGITGLFYTQLIGII) threads the bilayer. At 207–265 (TDTTSIEKMSNCCEDISRPRKPWQQTFSEVFGTRWKILWFIPFRQRQPLRVPYHFANHV) the chain is on the cytoplasmic side.

The protein belongs to the DHHC palmitoyltransferase family. In terms of tissue distribution, widely expressed.

Its subcellular location is the golgi apparatus membrane. It is found in the golgi apparatus. It localises to the cis-Golgi network membrane. The protein localises to the cell membrane. The catalysed reaction is L-cysteinyl-[protein] + hexadecanoyl-CoA = S-hexadecanoyl-L-cysteinyl-[protein] + CoA. Functionally, palmitoyltransferase that catalyzes the addition of palmitate onto various protein substrates. Palmitoylates sex steroid hormone receptors, including ESR1, PGR and AR, thereby regulating their targeting to the plasma membrane. This affects rapid intracellular signaling by sex hormones via ERK and AKT kinases and the generation of cAMP, but does not affect that mediated by their nuclear receptor. Palmitoylates FYN, regulates its localization in hair follicles and plays a key role in epidermal homeostasis and hair follicle differentiation. Through the palmitoylation of PLCB1 and the regulation of PLCB1 downstream signaling may indirectly regulate the function of the endothelial barrier and the adhesion of leukocytes to the endothelium. Also has a palmitoyltransferase activity toward ADRA1D, positively regulating its activity and expression and may thereby play a role in vascular contraction. May also palmitoylate eNOS and LCK. The protein is Palmitoyltransferase ZDHHC21 of Homo sapiens (Human).